We begin with the raw amino-acid sequence, 312 residues long: Ribose-phosphate pyrophosphokinase (312 aa).

ATP is bound by residues 34–36 (DLE) and 93–94 (RQ). 2 residues coordinate Mg(2+): H127 and D168. The active site involves K192. Residues R194, D218, and 222 to 226 (DSAGT) each bind D-ribose 5-phosphate.

The protein belongs to the ribose-phosphate pyrophosphokinase family. Class I subfamily. In terms of assembly, homohexamer. The cofactor is Mg(2+).

The protein localises to the cytoplasm. It catalyses the reaction D-ribose 5-phosphate + ATP = 5-phospho-alpha-D-ribose 1-diphosphate + AMP + H(+). Its pathway is metabolic intermediate biosynthesis; 5-phospho-alpha-D-ribose 1-diphosphate biosynthesis; 5-phospho-alpha-D-ribose 1-diphosphate from D-ribose 5-phosphate (route I): step 1/1. Its function is as follows. Involved in the biosynthesis of the central metabolite phospho-alpha-D-ribosyl-1-pyrophosphate (PRPP) via the transfer of pyrophosphoryl group from ATP to 1-hydroxyl of ribose-5-phosphate (Rib-5-P). The sequence is that of Ribose-phosphate pyrophosphokinase from Caulobacter vibrioides (strain ATCC 19089 / CIP 103742 / CB 15) (Caulobacter crescentus).